Here is a 522-residue protein sequence, read N- to C-terminus: Tetratricopeptide repeat protein 39C (522 aa).

TPR repeat units lie at residues 254–287 (SLFM…AVDQ), 292–325 (HVCL…SRWS), and 424–457 (GLKH…ESCR).

Belongs to the TTC39 family.

In Rattus norvegicus (Rat), this protein is Tetratricopeptide repeat protein 39C (Ttc39c).